Consider the following 381-residue polypeptide: Guanine nucleotide-binding protein G(s) subunit alpha (381 aa).

Cys3 carries S-palmitoyl cysteine lipidation. Residues 36–381 (ALHRLLLLGA…RMHLQKYELL (346 aa)) form the G-alpha domain. A G1 motif region spans residues 39-52 (RLLLLGAGESGKST). GTP is bound by residues 44 to 51 (GAGESGKS), 183 to 189 (LRCRVLT), 208 to 212 (GVGGQ), 277 to 280 (NKQD), and Ala353. Mg(2+) is bound by residues Ser51 and Thr189. Positions 181–189 (DILRCRVLT) are G2 motif. Residues 204–213 (FYMFGVGGQR) form a G3 motif region. The segment at 273 to 280 (ILFLNKQD) is G4 motif. The tract at residues 351–356 (TTAVDT) is G5 motif.

Belongs to the G-alpha family. G(s) subfamily. G proteins are composed of 3 units; alpha, beta and gamma. The alpha chain contains the guanine nucleotide binding site.

In terms of biological role, guanine nucleotide-binding proteins (G proteins) are involved as modulators or transducers in various transmembrane signaling systems. The G(s) protein is involved in hormonal regulation of adenylate cyclase: it activates the cyclase in response to beta-adrenergic stimuli. The chain is Guanine nucleotide-binding protein G(s) subunit alpha from Geodia cydonium (Sponge).